The chain runs to 116 residues: NADH-ubiquinone oxidoreductase chain 3 (116 aa).

Helical transmembrane passes span 8–28 (VAATALISLILAFVAFWLPSL), 56–76 (FFLVAILFLLFDLEIALLLPL), and 87–107 (ISLLWATSIIILLTLGLIYEW).

This sequence belongs to the complex I subunit 3 family.

The protein resides in the mitochondrion membrane. It carries out the reaction a ubiquinone + NADH + 5 H(+)(in) = a ubiquinol + NAD(+) + 4 H(+)(out). Functionally, core subunit of the mitochondrial membrane respiratory chain NADH dehydrogenase (Complex I) that is believed to belong to the minimal assembly required for catalysis. Complex I functions in the transfer of electrons from NADH to the respiratory chain. The immediate electron acceptor for the enzyme is believed to be ubiquinone. This is NADH-ubiquinone oxidoreductase chain 3 (MT-ND3) from Squalus acanthias (Spiny dogfish).